The following is a 689-amino-acid chain: MIEMAAEKEPFLVPAPPPPLKDESGGGGGPTVPPHQEAASGELRGGTERGPGRCAPSAGSPAAAVGRESPGAAATSSSGPQAQQHRGGGPQAQSHGEARLSDPPGRAAPPDVGEERRGGGGTELGPPAPPRPRNGYQPHRPPGGGGGKRRNSCNVGGGGGGFKHPAFKRRRRVNSDCDSVLPSNFLLGGNIFDPLNLNSLLDEEVSRTLNAETPKSSPLPAKGRDPVEILIPKDITDPLSLNTCTDEGHVVLASPLKTGRKRHRHRGQHHQQQQAAGGSESHPVPPTAPLTPLLHGEGASQQPRHRGQNRDAPQPYELNTAINCRDEVVSPLPSALQGPSGSLSAPPAASVISAPPSSSSRHRKRRRTSSKSEAGARGGGQGSKEKGRGSWGGRHHHHHPLPAAGFKKQQRKFQYGNYCKYYGYRNPSCEDGRLRVLKPEWFRGRDVLDLGCNVGHLTLSIACKWGPSRMVGLDIDSRLIHSARQNIRHYLSEELRLPPQTLEGDPGAEGEEGTTTVRKRSCFPASLTASRGPIAAPQVPLDGADTSVFPNNVVFVTGNYVLDRDDLVEAQTPEYDVVLCLSLTKWVHLNWGDEGLKRMFRRIYRHLRPGGILVLEPQPWSSYGKRKTLTETIYKNYYRIQLKPEQFSSYLTSPDVGFSSYELVATPHNTSKGFQRPVYLFHKARSPSH.

An N-acetylmethionine modification is found at M1. Positions 1 to 10 are enriched in basic and acidic residues; the sequence is MIEMAAEKEP. Positions 1-167 are disordered; sequence MIEMAAEKEP…GGGGFKHPAF (167 aa). A compositionally biased stretch (low complexity) spans 52-84; the sequence is GRCAPSAGSPAAAVGRESPGAAATSSSGPQAQQ. Phosphoserine is present on residues S57, S60, S69, and S101. The residue at position 117 (R117) is an Omega-N-methylarginine. Phosphoserine is present on residues S152, S175, and S179. Residue T213 is modified to Phosphothreonine. Phosphoserine occurs at positions 216, 217, and 254. Over residues 258–269 the composition is skewed to basic residues; that stretch reads TGRKRHRHRGQH. The tract at residues 258–314 is disordered; the sequence is TGRKRHRHRGQHHQQQQAAGGSESHPVPPTAPLTPLLHGEGASQQPRHRGQNRDAPQ. T291 carries the phosphothreonine modification. 2 positions are modified to phosphoserine: S330 and S344. Residues 332 to 407 form a disordered region; sequence LPSALQGPSG…HHPLPAAGFK (76 aa). Over residues 338–359 the composition is skewed to low complexity; it reads GPSGSLSAPPAASVISAPPSSS. Residues 360–369 show a composition bias toward basic residues; the sequence is SRHRKRRRTS. S390 is modified (phosphoserine). Residues Y422, R433, 451 to 453, 474 to 475, 559 to 560, and L581 contribute to the S-adenosyl-L-methionine site; these read GCN, DI, and NY. The 256-residue stretch at 431 to 686 folds into the Bin3-type SAM domain; it reads DGRLRVLKPE…PVYLFHKARS (256 aa). Residue K643 forms a Glycyl lysine isopeptide (Lys-Gly) (interchain with G-Cter in SUMO2) linkage.

The protein belongs to the methyltransferase superfamily. In terms of assembly, core component of the 7SK RNP complex, at least composed of 7SK RNA, LARP7, MEPCE, HEXIM1 (or HEXIM2) and P-TEFb (composed of CDK9 and CCNT1/cyclin-T1). Interacts with METTL16. Interacts with RBM7; upon genotoxic stress this interaction is enhanced, triggering the release of inactive P-TEFb complex from the core, yielding to P-TEFb complex activation. Post-translationally, dephosphorylated at Ser-152 by the PNUTS-PP1 complex, promoting RNA polymerase II transcription pause-release. Expressed in chronic myeloid leukemia cells, adrenal gland, brain, cerebellum, kidney, lung, mammary gland and testis. Weakly or not expressed in other tissues.

It localises to the nucleus. The catalysed reaction is a 5'-end triphospho-guanosine-ribonucleotide-snRNA + S-adenosyl-L-methionine = a 5'-end methyltriphosphate-guanosine-ribonucleotide-snRNA + S-adenosyl-L-homocysteine. Its function is as follows. S-adenosyl-L-methionine-dependent methyltransferase that adds a methylphosphate cap at the 5'-end of 7SK snRNA (7SK RNA), leading to stabilize it. Also has a non-enzymatic function as part of the 7SK RNP complex: the 7SK RNP complex sequesters the positive transcription elongation factor b (P-TEFb) in a large inactive 7SK RNP complex preventing RNA polymerase II phosphorylation and subsequent transcriptional elongation. The 7SK RNP complex also promotes snRNA gene transcription by RNA polymerase II via interaction with the little elongation complex (LEC). In the 7SK RNP complex, MEPCE is required to stabilize 7SK RNA and facilitate the assembly of 7SK RNP complex. MEPCE has a non-enzymatic function in the 7SK RNP complex; interaction with LARP7 within the 7SK RNP complex occluding its catalytic center. Also required for stability of U6 snRNAs. The polypeptide is 7SK snRNA methylphosphate capping enzyme (Homo sapiens (Human)).